A 357-amino-acid chain; its full sequence is Protein MGF 360-8L (357 aa).

Belongs to the asfivirus MGF 360 family.

Its function is as follows. Plays a role in virus cell tropism, and may be required for efficient virus replication in macrophages. In African swine fever virus (isolate Tick/South Africa/Pretoriuskop Pr4/1996) (ASFV), this protein is Protein MGF 360-8L.